A 439-amino-acid chain; its full sequence is Tol-Pal system protein TolB (439 aa).

Residues 1–22 (MKKPLRWLAALTVLLLPLSALA) form the signal peptide.

Belongs to the TolB family. The Tol-Pal system is composed of five core proteins: the inner membrane proteins TolA, TolQ and TolR, the periplasmic protein TolB and the outer membrane protein Pal. They form a network linking the inner and outer membranes and the peptidoglycan layer.

It is found in the periplasm. Functionally, part of the Tol-Pal system, which plays a role in outer membrane invagination during cell division and is important for maintaining outer membrane integrity. This Xanthomonas oryzae pv. oryzae (strain MAFF 311018) protein is Tol-Pal system protein TolB.